The chain runs to 111 residues: Nucleoid-associated protein TTE0040 (111 aa).

The protein belongs to the YbaB/EbfC family. As to quaternary structure, homodimer.

The protein localises to the cytoplasm. It localises to the nucleoid. Functionally, binds to DNA and alters its conformation. May be involved in regulation of gene expression, nucleoid organization and DNA protection. The sequence is that of Nucleoid-associated protein TTE0040 from Caldanaerobacter subterraneus subsp. tengcongensis (strain DSM 15242 / JCM 11007 / NBRC 100824 / MB4) (Thermoanaerobacter tengcongensis).